A 400-amino-acid polypeptide reads, in one-letter code: uncharacterized protein (400 aa).

Positions 112-126 are enriched in basic and acidic residues; that stretch reads SESTAQIEKKPRKPL. Residues 112–151 form a disordered region; that stretch reads SESTAQIEKKPRKPLDSVGLLEGDRNKRKKSPQMNDFNIK.

This is an uncharacterized protein from Homo sapiens (Human).